Consider the following 351-residue polypeptide: Vacuolar protein sorting-associated protein 72 homolog (351 aa).

The interval 1–136 is disordered; sequence MAASRSRRNN…DSGRKSIRTS (136 aa). Acidic residues predominate over residues 36 to 72; that stretch reads QEDEEDKEYEQKDEEEDVVDSDFSIDENDEPVSDQEE. 3 positions are modified to phosphoserine: Ser-56, Ser-59, and Ser-68. Residues 87–100 show a composition bias toward basic and acidic residues; sequence AYKETKPAVKKETK. Residues 105 to 121 show a composition bias toward basic residues; that stretch reads LHKKRPGGGVTKRRPRP. A coiled-coil region spans residues 142–202; that stretch reads QATKIRLKEL…QKMELEKKKS (61 aa). The DNA-binding element occupies 156 to 208; it reads KRKKKKVRVEDYMPTQEELLEEAKITEEENTKSLEKFQKMELEKKKSRPTKRT.

It belongs to the VPS72/YL1 family. In terms of assembly, interacts with H2AV. Component of the Tip60 chromatin-remodeling complex which contains the catalytic subunit Tip60 and the subunits Domino, Tra1, Brd8, E(Pc), DMAP1, Pontin, Reptin, Ing3, Act87E, BAP55, Mrg15, MrgBP, Gas41 and YL-1.

Its subcellular location is the nucleus. Its function is as follows. Part of the Tip60 chromatin-remodeling complex which is involved in DNA repair. Upon induction of DNA double-strand breaks, this complex acetylates phosphorylated H2AV in nucleosomes and exchanges it with unmodified H2AV. In Drosophila melanogaster (Fruit fly), this protein is Vacuolar protein sorting-associated protein 72 homolog (YL-1).